A 449-amino-acid chain; its full sequence is Probable phosphoglucosamine mutase (449 aa).

S96 serves as the catalytic Phosphoserine intermediate. Residues S96, D233, D235, and D237 each contribute to the Mg(2+) site. Residue S96 is modified to Phosphoserine.

It belongs to the phosphohexose mutase family. It depends on Mg(2+) as a cofactor. In terms of processing, activated by phosphorylation.

The enzyme catalyses alpha-D-glucosamine 1-phosphate = D-glucosamine 6-phosphate. Functionally, catalyzes the conversion of glucosamine-6-phosphate to glucosamine-1-phosphate. Does not display phosphoglucomutase (PGM) or phosphomannomutase (PMM) activities. The chain is Probable phosphoglucosamine mutase (glmM) from Thermococcus kodakarensis (strain ATCC BAA-918 / JCM 12380 / KOD1) (Pyrococcus kodakaraensis (strain KOD1)).